The following is a 252-amino-acid chain: Probable phosphatase SO_1652 (252 aa).

9 residues coordinate Zn(2+): H8, H10, H16, H41, E74, H102, H132, D193, and H195.

Belongs to the PHP family. Zn(2+) is required as a cofactor.

The chain is Probable phosphatase SO_1652 from Shewanella oneidensis (strain ATCC 700550 / JCM 31522 / CIP 106686 / LMG 19005 / NCIMB 14063 / MR-1).